We begin with the raw amino-acid sequence, 156 residues long: Small ribosomal subunit protein uS7 (156 aa).

This sequence belongs to the universal ribosomal protein uS7 family. Part of the 30S ribosomal subunit. Contacts proteins S9 and S11.

One of the primary rRNA binding proteins, it binds directly to 16S rRNA where it nucleates assembly of the head domain of the 30S subunit. Is located at the subunit interface close to the decoding center, probably blocks exit of the E-site tRNA. This Kineococcus radiotolerans (strain ATCC BAA-149 / DSM 14245 / SRS30216) protein is Small ribosomal subunit protein uS7.